Reading from the N-terminus, the 201-residue chain is 3-isopropylmalate dehydratase small subunit (201 aa).

Belongs to the LeuD family. LeuD type 1 subfamily. In terms of assembly, heterodimer of LeuC and LeuD.

It carries out the reaction (2R,3S)-3-isopropylmalate = (2S)-2-isopropylmalate. Its pathway is amino-acid biosynthesis; L-leucine biosynthesis; L-leucine from 3-methyl-2-oxobutanoate: step 2/4. Catalyzes the isomerization between 2-isopropylmalate and 3-isopropylmalate, via the formation of 2-isopropylmaleate. The protein is 3-isopropylmalate dehydratase small subunit of Escherichia coli O157:H7.